Consider the following 388-residue polypeptide: LL-diaminopimelate aminotransferase (388 aa).

Residues Y15 and G40 each coordinate substrate. Residues Y69, S103–K104, Y128, N178, Y209, and S237–S239 contribute to the pyridoxal 5'-phosphate site. Substrate-binding residues include K104, Y128, and N178. The residue at position 240 (K240) is an N6-(pyridoxal phosphate)lysine. R248 is a pyridoxal 5'-phosphate binding site. Residue R366 participates in substrate binding.

This sequence belongs to the class-I pyridoxal-phosphate-dependent aminotransferase family. LL-diaminopimelate aminotransferase subfamily. Homodimer. Pyridoxal 5'-phosphate is required as a cofactor.

It catalyses the reaction (2S,6S)-2,6-diaminopimelate + 2-oxoglutarate = (S)-2,3,4,5-tetrahydrodipicolinate + L-glutamate + H2O + H(+). The protein operates within amino-acid biosynthesis; L-lysine biosynthesis via DAP pathway; LL-2,6-diaminopimelate from (S)-tetrahydrodipicolinate (aminotransferase route): step 1/1. In terms of biological role, involved in the synthesis of meso-diaminopimelate (m-DAP or DL-DAP), required for both lysine and peptidoglycan biosynthesis. Catalyzes the direct conversion of tetrahydrodipicolinate to LL-diaminopimelate. Can also use m-DAP instead of LL-DAP as the amino-group donor. This Syntrophobacter fumaroxidans (strain DSM 10017 / MPOB) protein is LL-diaminopimelate aminotransferase.